Here is a 1163-residue protein sequence, read N- to C-terminus: Receptor-type guanylate cyclase gcy-21 (1163 aa).

An N-terminal signal peptide occupies residues 1-17 (MLSAVLLLLFFIQNVQN). Residues 18-490 (FDKIELEDIT…ENCGPPANNT (473 aa)) are Extracellular-facing. Asn102, Asn296, Asn322, Asn346, Asn466, and Asn488 each carry an N-linked (GlcNAc...) asparagine glycan. Residues 491-511 (FIIVISVGVAVLIGLAIAAAF) traverse the membrane as a helical segment. The Cytoplasmic portion of the chain corresponds to 512–1163 (LYKRYRYERR…QIQEKTYEFS (652 aa)). Residues 587–882 (FNTGSTARAG…QIKRKLKPLT (296 aa)) form the Protein kinase domain. Residues 593–601 (ARAGPFGPI) and Lys635 each bind ATP. Positions 901-930 (TDKLEKDIAERNEELEGEKAKSEALLKMML) form a coiled coil. Positions 953–1083 (TVFFSDCPGF…DTVNTASRME (131 aa)) constitute a Guanylate cyclase domain.

This sequence belongs to the adenylyl cyclase class-4/guanylyl cyclase family. In terms of tissue distribution, expressed in ASG sensory neurons.

The protein resides in the cell membrane. It carries out the reaction GTP = 3',5'-cyclic GMP + diphosphate. In terms of biological role, guanylate cyclase involved in the production of the second messenger cGMP. Plays a role in dauer formation. In Caenorhabditis elegans, this protein is Receptor-type guanylate cyclase gcy-21.